A 293-amino-acid polypeptide reads, in one-letter code: tRNA (guanine-N(7)-)-methyltransferase (293 aa).

A compositionally biased stretch (basic and acidic residues) spans 1-31; sequence MGGDKIKKDKRQKREDYRAAMRKDDISELPR. 2 disordered regions span residues 1–33 and 68–97; these read MGGD…PRKK and IVDE…TPLR. Over residues 75–85 the composition is skewed to pro residues; sequence TSPPPPPPVPE. S-adenosyl-L-methionine is bound by residues glycine 111, 134 to 135, 169 to 170, and cysteine 189; these read EI and NT. The active site involves aspartate 192. Position 267–269 (267–269) interacts with S-adenosyl-L-methionine; that stretch reads TEE.

This sequence belongs to the class I-like SAM-binding methyltransferase superfamily. TrmB family. In terms of assembly, forms a complex with TRM82.

It localises to the nucleus. The catalysed reaction is guanosine(46) in tRNA + S-adenosyl-L-methionine = N(7)-methylguanosine(46) in tRNA + S-adenosyl-L-homocysteine. Its pathway is tRNA modification; N(7)-methylguanine-tRNA biosynthesis. Functionally, catalyzes the formation of N(7)-methylguanine at position 46 (m7G46) in tRNA. This chain is tRNA (guanine-N(7)-)-methyltransferase, found in Chaetomium globosum (strain ATCC 6205 / CBS 148.51 / DSM 1962 / NBRC 6347 / NRRL 1970) (Soil fungus).